The chain runs to 1006 residues: Phosphatidylinositol 4,5-bisphosphate 5-phosphatase A (1006 aa).

Positions 1–416 (MEGQSSRGSR…SSSPWSAQPT (416 aa)) are disordered. A compositionally biased stretch (polar residues) spans 27–41 (VAQTGAPSKVDSSFQ). Residue Arg56 is modified to Asymmetric dimethylarginine; alternate. The residue at position 56 (Arg56) is an Omega-N-methylarginine; alternate. Residue Arg65 is modified to Omega-N-methylarginine. Position 76 is an asymmetric dimethylarginine (Arg76). Arg83 is modified (asymmetric dimethylarginine; alternate). Arg83 carries the post-translational modification Omega-N-methylarginine; alternate. Residues 94-112 (GQKTATAHRSSSLAPTSVG) show a composition bias toward polar residues. The RSXSXX motif 1 signature appears at 102-107 (RSSSLA). Residues 180 to 193 (LAASGLSLALASEE) show a composition bias toward low complexity. Positions 196–209 (PELPSTPSPVPSPV) are enriched in pro residues. Residues 210–234 (LSPTQEQALAPASTASGAASVGQTS) are compositionally biased toward low complexity. The segment covering 256-273 (PAQTSGPTGSPPCIQTSP) has biased composition (polar residues). A phosphoserine mark is found at Ser291 and Ser324. Residues 337–347 (VPPPLPKPPRS) are compositionally biased toward pro residues. The SH3-binding signature appears at 345-350 (PRSPSR). Low complexity-rich tracts occupy residues 348 to 360 (PSRS…NRSP) and 398 to 409 (TTSSSTSTLSSS). Residues 350–355 (RSPSHS) carry the RSXSXX motif 2 motif. Residues 425–728 (ITVVTWNVGT…SDHKPVAAQF (304 aa)) are catalytic. The required for ruffle localization stretch occupies residues 729–840 (LLQFAFRDDM…IGITEPFQIS (112 aa)). Over residues 844-858 (SELASSSTDSSGTSS) the composition is skewed to low complexity. The interval 844-1006 (SELASSSTDS…RGLEEGGLGP (163 aa)) is disordered. Short sequence motifs (RSXSXX motif) lie at residues 874–879 (RSPSPG) and 885–890 (RSRSPG). The residue at position 903 (Ser903) is a Phosphoserine. An RSXSXX motif 5 motif is present at residues 911–916 (RSPSPQ). Residues 927–946 (RSSNGSSRGSSEEGPSGLPG) are compositionally biased toward low complexity. Residue Ser990 is modified to Phosphoserine.

This sequence belongs to the inositol 1,4,5-trisphosphate 5-phosphatase type II family.

The protein localises to the cytoplasm. The catalysed reaction is 1D-myo-inositol 1,4,5-trisphosphate + H2O = 1D-myo-inositol 1,4-bisphosphate + phosphate. The enzyme catalyses 1D-myo-inositol 1,3,4,5-tetrakisphosphate + H2O = 1D-myo-inositol 1,3,4-trisphosphate + phosphate. It catalyses the reaction a 1,2-diacyl-sn-glycero-3-phospho-(1D-myo-inositol-4,5-bisphosphate) + H2O = a 1,2-diacyl-sn-glycero-3-phospho-(1D-myo-inositol 4-phosphate) + phosphate. Functionally, inositol 5-phosphatase, which converts inositol 1,4,5-trisphosphate to inositol 1,4-bisphosphate. Also converts phosphatidylinositol 4,5-bisphosphate to phosphatidylinositol 4-phosphate and inositol 1,3,4,5-tetrakisphosphate to inositol 1,3,4-trisphosphate in vitro. May be involved in modulation of the function of inositol and phosphatidylinositol polyphosphate-binding proteins that are present at membranes ruffles. The sequence is that of Phosphatidylinositol 4,5-bisphosphate 5-phosphatase A (INPP5J) from Homo sapiens (Human).